A 390-amino-acid chain; its full sequence is Chitinase-3-like protein 2 (390 aa).

The N-terminal stretch at 1–26 is a signal peptide; sequence MGATTMDQKSLWAGVVVLLLLQGGSA. Residues 27-390 enclose the GH18 domain; sequence YKLVCYFTNW…QAVKRSLGSL (364 aa). A disulfide bridge connects residues C31 and C56. The N-linked (GlcNAc...) asparagine glycan is linked to N35. Residues 75-76, 102-105, Y104, Y146, 210-213, D213, and W360 contribute to the chitin site; these read DK, GGYL, and LSFD.

The protein belongs to the glycosyl hydrolase 18 family. Highest expression in chondrocytes, followed by synoviocytes, lung and heart. Not detected in spleen, pancreas, and liver. May also be expressed in developing brain and placenta.

The protein resides in the secreted. Its function is as follows. Lectin that binds chitooligosaccharides and other glycans with high affinity, but not heparin. Has no chitinase activity. The polypeptide is Chitinase-3-like protein 2 (CHI3L2) (Homo sapiens (Human)).